Consider the following 651-residue polypeptide: Altered inheritance of mitochondria protein 21 (651 aa).

Positions methionine 1–threonine 85 are disordered. Residues valine 9–serine 19 show a composition bias toward basic and acidic residues. Threonine 18 is modified (phosphothreonine). The residue at position 36 (serine 36) is a Phosphoserine. Threonine 58 carries the phosphothreonine modification. Residue serine 70 is modified to Phosphoserine. Threonine 85 is modified (phosphothreonine). Residue serine 104 is modified to Phosphoserine. The segment covering asparagine 110–serine 119 has biased composition (basic residues). Disordered stretches follow at residues asparagine 110–glutamate 522 and isoleucine 549–leucine 651. Polar residues-rich tracts occupy residues glutamine 133–serine 149 and serine 164–glutamate 178. Residues valine 179–isoleucine 213 show a composition bias toward basic and acidic residues. Phosphoserine occurs at positions 183, 206, and 231. The segment covering serine 243–isoleucine 272 has biased composition (basic and acidic residues). A Phosphothreonine modification is found at threonine 277. Residue serine 284 is modified to Phosphoserine. Polar residues predominate over residues glutamate 296 to alanine 323. Serine 324 is modified (phosphoserine). Composition is skewed to basic and acidic residues over residues lysine 339 to glutamate 361 and glutamate 372 to arginine 383. The tract at residues arginine 383–proline 396 is interaction with SH3 domain of ABP1. 2 stretches are compositionally biased toward polar residues: residues aspartate 414–serine 427 and serine 437–leucine 452. Positions leucine 471 to serine 482 are enriched in basic and acidic residues. The segment covering arginine 501 to proline 512 has biased composition (basic residues). Threonine 552 carries the post-translational modification Phosphothreonine. Residues glutamine 556–leucine 567 show a composition bias toward basic and acidic residues. Residues proline 575 to glycine 586 are compositionally biased toward polar residues. Serine 592, serine 595, serine 597, serine 599, serine 639, serine 643, serine 647, and serine 650 each carry phosphoserine. Over residues glutamate 594–arginine 605 the composition is skewed to polar residues. A compositionally biased stretch (basic and acidic residues) spans serine 639–leucine 651.

This sequence belongs to the AIM21 family. As to quaternary structure, interacts with ribosomes. Interacts with ABP1.

It localises to the cytoplasm. It is found in the cytoskeleton. The protein resides in the actin patch. In terms of biological role, involved in mitochondrial migration along actin filaments. This chain is Altered inheritance of mitochondria protein 21 (AIM21), found in Saccharomyces cerevisiae (strain RM11-1a) (Baker's yeast).